Here is a 761-residue protein sequence, read N- to C-terminus: 5-methyltetrahydropteroyltriglutamate--homocysteine methyltransferase (761 aa).

5-methyltetrahydropteroyltri-L-glutamate-binding positions include 16 to 19 (RELK) and lysine 116. Residues 435–437 (IGS) and glutamate 488 each bind L-homocysteine. Residues 435–437 (IGS) and glutamate 488 contribute to the L-methionine site. Residues 519 to 520 (RC) and tryptophan 565 each bind 5-methyltetrahydropteroyltri-L-glutamate. Position 603 (aspartate 603) interacts with L-homocysteine. An L-methionine-binding site is contributed by aspartate 603. Residue glutamate 609 coordinates 5-methyltetrahydropteroyltri-L-glutamate. Zn(2+)-binding residues include histidine 645, cysteine 647, and glutamate 669. The active-site Proton donor is histidine 698. Residue cysteine 730 coordinates Zn(2+).

Belongs to the vitamin-B12 independent methionine synthase family. Zn(2+) is required as a cofactor.

The enzyme catalyses 5-methyltetrahydropteroyltri-L-glutamate + L-homocysteine = tetrahydropteroyltri-L-glutamate + L-methionine. Its pathway is amino-acid biosynthesis; L-methionine biosynthesis via de novo pathway; L-methionine from L-homocysteine (MetE route): step 1/1. In terms of biological role, catalyzes the transfer of a methyl group from 5-methyltetrahydrofolate to homocysteine resulting in methionine formation. The polypeptide is 5-methyltetrahydropteroyltriglutamate--homocysteine methyltransferase (Hahella chejuensis (strain KCTC 2396)).